A 508-amino-acid polypeptide reads, in one-letter code: Cytochrome P450 monooxygenase aflV (508 aa).

A helical membrane pass occupies residues 18 to 38; it reads LTWWFLAVGGAWIVSKIIKIL. 4 N-linked (GlcNAc...) asparagine glycosylation sites follow: N192, N209, N302, and N408. Position 453 (C453) interacts with heme.

This sequence belongs to the cytochrome P450 family. Requires heme as cofactor.

It localises to the membrane. The protein operates within mycotoxin biosynthesis; aflatoxin biosynthesis. In terms of biological role, cytochrome P450 monooxygenase; part of the gene cluster that mediates the biosynthesis of aflatoxins, a group of polyketide-derived furanocoumarins, and part of the most toxic and carcinogenic compounds among the known mycotoxins. The four major aflatoxins produced by A.parasiticus are aflatoxin B1 (AFB1), aflatoxin B2 (AFB2), aflatoxin G1 (AFG1) and aflatoxin G2 (AFG2). The role of the cytochrome P450 monooxygenase aflV in aflatoxin biosynthesis has still to be characterized. The biosynthesis of aflatoxins begins with the norsolorinic acid synthase aflC that combines a hexanoyl starter unit produced by the fatty acid synthase aflA/aflB and 7 malonyl-CoA extender units to synthesize the precursor NOR. The second step is the conversion of NOR to averantin and requires the norsolorinic acid ketoreductase aflD, which catalyzes the dehydration of norsolorinic acid to form (1'S)-averantin. The norsolorinic acid reductases aflE and aflF may also play a role in the conversion of NOR to AVN. The cytochrome P450 monooxygenase aflG then catalyzes the hydroxylation of AVN to 5'hydroxyaverantin (HAVN). The next step is performed by the 5'-hydroxyaverantin dehydrogenase aflH that transforms HAVN to 5'-oxoaverantin (OAVN) which is further converted to averufin (AVF) by aflK that plays a dual role in the pathway, as a 5'-oxoaverantin cyclase that mediates conversion of 5'-oxoaverantin, as well as a versicolorin B synthase in a later step in the pathway. The averufin oxidase aflI catalyzes the conversion of AVF to versiconal hemiacetal acetate (VHA). VHA is then the substrate for the versiconal hemiacetal acetate esterase aflJ to yield versiconal (VAL). Versicolorin B synthase aflK then converts VAL to versicolorin B (VERB) by closing the bisfuran ring of aflatoxin which is required for DNA-binding, thus giving to aflatoxin its activity as a mutagen. Then, the activity of the versicolorin B desaturase aflL leads to versicolorin A (VERA). A branch point starts from VERB since it can also be converted to dihydrodemethylsterigmatocystin (DMDHST), probably also by aflL, VERA being a precursor for aflatoxins B1 and G1, and DMDHST for aflatoxins B2 and G2. Next, the versicolorin reductase aflM and the cytochrome P450 monooxygenase aflN are involved in conversion of VERA to demethylsterigmatocystin (DMST). AflX and aflY seem also involved in this step, through probable aflX-mediated epoxide ring-opening step following versicolorin A oxidation and aflY-mediated Baeyer-Villiger oxidation required for the formation of the xanthone ring. The methyltransferase aflO then leads to the modification of DMST to sterigmatocystin (ST), and of DMDHST to dihydrosterigmatocystin (DHST). Both ST and DHST are then substrates of the O-methyltransferase aflP to yield O-methylsterigmatocystin (OMST) and dihydro-O-methylsterigmatocystin (DHOMST), respectively. Finally OMST is converted to aflatoxins B1 and G1, and DHOMST to aflatoxins B2 and G2, via the action of several enzymes including O-methylsterigmatocystin oxidoreductase aflQ, the cytochrome P450 monooxygenase aflU, but also the NADH-dependent flavin oxidoreductase nadA which is specifically required for the synthesis of AFG1. This Aspergillus parasiticus (strain ATCC 56775 / NRRL 5862 / SRRC 143 / SU-1) protein is Cytochrome P450 monooxygenase aflV.